Reading from the N-terminus, the 265-residue chain is Orphan methyltransferase M.BamHII (265 aa).

This sequence belongs to the N(4)/N(6)-methyltransferase family. N(4) subfamily.

It catalyses the reaction a 2'-deoxycytidine in DNA + S-adenosyl-L-methionine = an N(4)-methyl-2'-deoxycytidine in DNA + S-adenosyl-L-homocysteine + H(+). Its function is as follows. A beta subtype methylase, recognizes the double-stranded sequence 5'-GGATCC-3', methylates C-? on both strands. No endonuclease has been identified for this methylase, although it is speculated it might protect against BamHI. The protein is Orphan methyltransferase M.BamHII (bamHIIM) of Bacillus amyloliquefaciens (Bacillus velezensis).